Reading from the N-terminus, the 295-residue chain is Glycine N-acyltransferase-like protein Keg1 (295 aa).

N6-acetyllysine; alternate is present on K41. N6-succinyllysine; alternate is present on K41. Position 43 is an N6-acetyllysine (K43). K48 is subject to N6-acetyllysine; alternate. Position 48 is an N6-succinyllysine; alternate (K48). An N6-acetyllysine mark is found at K80 and K83. N6-acetyllysine; alternate is present on residues K124, K128, and K140. 3 positions are modified to N6-succinyllysine; alternate: K124, K128, and K140. K150 bears the N6-acetyllysine mark. The residue at position 255 (K255) is an N6-acetyllysine; alternate. N6-succinyllysine; alternate is present on K255.

The protein belongs to the glycine N-acyltransferase family. As to quaternary structure, binds to microtubules.

Its subcellular location is the cytoplasm. It localises to the cytoskeleton. The protein resides in the microtubule organizing center. The protein localises to the centrosome. The catalysed reaction is an acyl-CoA + glycine = an N-acylglycine + CoA + H(+). Functionally, acyltransferase which transfers the acyl group to the N-terminus of glycine. Can conjugate a multitude of substrates to form a variety of N-acylglycines. This Mus musculus (Mouse) protein is Glycine N-acyltransferase-like protein Keg1 (Keg1).